Reading from the N-terminus, the 311-residue chain is Olfactory receptor 5P3 (311 aa).

Residues 1 to 25 are Extracellular-facing; sequence MGTGNDTTVVEFTLLGLSEDTTVCA. An N-linked (GlcNAc...) asparagine glycan is attached at Asn-5. The chain crosses the membrane as a helical span at residues 26–46; the sequence is ILFLVFLGIYVVTLMGNISII. Residues 47-54 lie on the Cytoplasmic side of the membrane; the sequence is VLIRRSHH. The helical transmembrane segment at 55 to 75 threads the bilayer; that stretch reads LHTPMYIFLCHLAFVDIGYSS. Residues 76–99 lie on the Extracellular side of the membrane; it reads SVTPVMLMSFLRKETSLPVAGCVA. Cys-97 and Cys-189 are joined by a disulfide. Residues 100 to 120 traverse the membrane as a helical segment; sequence QLCSVVTFGTAECFLLAAMAY. The Cytoplasmic portion of the chain corresponds to 121 to 139; sequence DRYVAICSPLLYSTCMSPG. Residues 140–160 form a helical membrane-spanning segment; it reads VCIILVGMSYLGGCVNAWTFI. Residues 161-196 are Extracellular-facing; it reads GCLLRLSFCGPNKVNHFFCDYSPLLKLACSHDFTFE. A helical membrane pass occupies residues 197–217; sequence IIPAISSGSIIVATVCVIAIS. The Cytoplasmic portion of the chain corresponds to 218-237; the sequence is YIYILITILKMHSTKGRHKA. The chain crosses the membrane as a helical span at residues 238 to 258; sequence FSTCTSHLTAVTLFYGTITFI. Residues 259–271 lie on the Extracellular side of the membrane; it reads YVMPKSSYSTDQN. A helical transmembrane segment spans residues 272–292; the sequence is KVVSVFYTVVIPMLNPLIYSL. The Cytoplasmic segment spans residues 293–311; it reads RNKEIKGALKRELRIKIFS.

Belongs to the G-protein coupled receptor 1 family. Expressed in the tongue.

It is found in the cell membrane. Its function is as follows. Odorant receptor (Potential). May be involved in taste perception. The chain is Olfactory receptor 5P3 (OR5P3) from Homo sapiens (Human).